The chain runs to 457 residues: uncharacterized protein (457 aa).

A run of 2 helical transmembrane segments spans residues 1–21 and 250–270; these read MVSSLASNIILALVVVLMTLL and ILIVTPGAGVGGLSHTLATTF.

The protein localises to the membrane. This is an uncharacterized protein from Saccharomyces cerevisiae (strain ATCC 204508 / S288c) (Baker's yeast).